The sequence spans 177 residues: NAD(P)H-quinone oxidoreductase subunit 6, chloroplastic (177 aa).

The next 5 membrane-spanning stretches (helical) occupy residues 10–30 (IFLVFLGSGLILGGLGVVLLT), 32–52 (PVYSAFSLGLVLVCISLFHIP), 61–81 (AQLLIYVGAINVLIVFAVMFM), 92–112 (LWTVGDGVTSLICTSILFSLI), and 152–172 (FYLPFELISIILLVALVGAIA).

It belongs to the complex I subunit 6 family. In terms of assembly, NDH is composed of at least 16 different subunits, 5 of which are encoded in the nucleus.

It localises to the plastid. It is found in the chloroplast thylakoid membrane. The enzyme catalyses a plastoquinone + NADH + (n+1) H(+)(in) = a plastoquinol + NAD(+) + n H(+)(out). It carries out the reaction a plastoquinone + NADPH + (n+1) H(+)(in) = a plastoquinol + NADP(+) + n H(+)(out). Its function is as follows. NDH shuttles electrons from NAD(P)H:plastoquinone, via FMN and iron-sulfur (Fe-S) centers, to quinones in the photosynthetic chain and possibly in a chloroplast respiratory chain. The immediate electron acceptor for the enzyme in this species is believed to be plastoquinone. Couples the redox reaction to proton translocation, and thus conserves the redox energy in a proton gradient. The chain is NAD(P)H-quinone oxidoreductase subunit 6, chloroplastic (ndhG) from Illicium oligandrum (Star anise).